A 518-amino-acid chain; its full sequence is Two-component response regulator-like PRR1 (518 aa).

The Response regulatory domain occupies 29–147; the sequence is RILLCDSDPS…ELLNLWTHVW (119 aa). 3 disordered regions span residues 172 to 241, 266 to 305, and 483 to 518; these read PSDA…PGVM, TPTT…GTDV, and VRQA…SSPE. Polar residues predominate over residues 196 to 212; the sequence is NQETSTSNQHEYESNPS. The CCT domain occupies 443-485; the sequence is RAAALAKFRLKRKERCFDKKVRYVNRKKLAETRPRVRGQFVRQ.

The protein belongs to the ARR-like family. Interacts with PIL13. Interacts with PIL15.

It is found in the nucleus. Controls photoperiodic flowering response. Seems to be one of the component of the circadian clock. Expression of several members of the ARR-like family is controlled by circadian rhythm. The particular coordinated sequential expression of PRR73, PRR37, PRR95, PRR59 and PPR1 result to circadian waves that may be at the basis of the endogenous circadian clock. This Oryza sativa subsp. japonica (Rice) protein is Two-component response regulator-like PRR1 (PRR1).